The following is a 955-amino-acid chain: Glycine dehydrogenase (decarboxylating) (955 aa).

Residue lysine 702 is modified to N6-(pyridoxal phosphate)lysine.

It belongs to the GcvP family. As to quaternary structure, the glycine cleavage system is composed of four proteins: P, T, L and H. The cofactor is pyridoxal 5'-phosphate.

The catalysed reaction is N(6)-[(R)-lipoyl]-L-lysyl-[glycine-cleavage complex H protein] + glycine + H(+) = N(6)-[(R)-S(8)-aminomethyldihydrolipoyl]-L-lysyl-[glycine-cleavage complex H protein] + CO2. Functionally, the glycine cleavage system catalyzes the degradation of glycine. The P protein binds the alpha-amino group of glycine through its pyridoxal phosphate cofactor; CO(2) is released and the remaining methylamine moiety is then transferred to the lipoamide cofactor of the H protein. This Bordetella avium (strain 197N) protein is Glycine dehydrogenase (decarboxylating).